A 422-amino-acid polypeptide reads, in one-letter code: tRNA hydroxylation protein P (422 aa).

Residues 1 to 58 form the signal peptide; the sequence is MNQVELLSPAGNLKKLKIALNYGADAVYGGVSHFSLRNRAGKEFTLETFKEGIDYAHA.

Belongs to the peptidase U32 family.

Functionally, involved in prephenate-dependent formation of 5-hydroxyuridine (ho5U) modification at position 34 in tRNAs, the first step in 5-carboxymethoxyuridine (cmo5U) biosynthesis. In Helicobacter pylori (strain ATCC 700392 / 26695) (Campylobacter pylori), this protein is tRNA hydroxylation protein P.